A 119-amino-acid chain; its full sequence is Phosphoribosyl-AMP cyclohydrolase (119 aa).

Aspartate 77 is a binding site for Mg(2+). Residue cysteine 78 coordinates Zn(2+). Mg(2+) contacts are provided by aspartate 79 and aspartate 81. The Zn(2+) site is built by cysteine 94 and cysteine 101.

This sequence belongs to the PRA-CH family. As to quaternary structure, homodimer. Mg(2+) serves as cofactor. The cofactor is Zn(2+).

Its subcellular location is the cytoplasm. The catalysed reaction is 1-(5-phospho-beta-D-ribosyl)-5'-AMP + H2O = 1-(5-phospho-beta-D-ribosyl)-5-[(5-phospho-beta-D-ribosylamino)methylideneamino]imidazole-4-carboxamide. Its pathway is amino-acid biosynthesis; L-histidine biosynthesis; L-histidine from 5-phospho-alpha-D-ribose 1-diphosphate: step 3/9. In terms of biological role, catalyzes the hydrolysis of the adenine ring of phosphoribosyl-AMP. This chain is Phosphoribosyl-AMP cyclohydrolase, found in Ruegeria pomeroyi (strain ATCC 700808 / DSM 15171 / DSS-3) (Silicibacter pomeroyi).